The primary structure comprises 209 residues: High frequency lysogenization protein HflD homolog (209 aa).

The protein belongs to the HflD family.

The protein resides in the cytoplasm. Its subcellular location is the cell inner membrane. This Halorhodospira halophila (strain DSM 244 / SL1) (Ectothiorhodospira halophila (strain DSM 244 / SL1)) protein is High frequency lysogenization protein HflD homolog.